Consider the following 668-residue polypeptide: Fructose-1,6-bisphosphatase class 3 (668 aa).

It belongs to the FBPase class 3 family. Requires Mn(2+) as cofactor.

The catalysed reaction is beta-D-fructose 1,6-bisphosphate + H2O = beta-D-fructose 6-phosphate + phosphate. It participates in carbohydrate biosynthesis; gluconeogenesis. The polypeptide is Fructose-1,6-bisphosphatase class 3 (Clostridium botulinum (strain Loch Maree / Type A3)).